Reading from the N-terminus, the 842-residue chain is Alanine--tRNA ligase (842 aa).

Zn(2+) is bound by residues H549, H553, C650, and H654.

This sequence belongs to the class-II aminoacyl-tRNA synthetase family. Zn(2+) serves as cofactor.

The protein localises to the cytoplasm. It catalyses the reaction tRNA(Ala) + L-alanine + ATP = L-alanyl-tRNA(Ala) + AMP + diphosphate. In terms of biological role, catalyzes the attachment of alanine to tRNA(Ala) in a two-step reaction: alanine is first activated by ATP to form Ala-AMP and then transferred to the acceptor end of tRNA(Ala). Also edits incorrectly charged Ser-tRNA(Ala) and Gly-tRNA(Ala) via its editing domain. This chain is Alanine--tRNA ligase, found in Campylobacter jejuni subsp. doylei (strain ATCC BAA-1458 / RM4099 / 269.97).